Consider the following 150-residue polypeptide: UPF0178 protein Maqu_2186 (150 aa).

It belongs to the UPF0178 family.

The polypeptide is UPF0178 protein Maqu_2186 (Marinobacter nauticus (strain ATCC 700491 / DSM 11845 / VT8) (Marinobacter aquaeolei)).